We begin with the raw amino-acid sequence, 75 residues long: Small ribosomal subunit protein bS16 (75 aa).

The protein belongs to the bacterial ribosomal protein bS16 family.

This chain is Small ribosomal subunit protein bS16, found in Campylobacter lari (strain RM2100 / D67 / ATCC BAA-1060).